Consider the following 525-residue polypeptide: GMP synthase [glutamine-hydrolyzing] (525 aa).

In terms of domain architecture, Glutamine amidotransferase type-1 spans 9–207 (RILILDFGSQ…VRDICQCEAL (199 aa)). Residue cysteine 86 is the Nucleophile of the active site. Residues histidine 181 and glutamate 183 contribute to the active site. Residues 208-400 (WTPAKIIDDA…LGLPYDMLYR (193 aa)) form the GMPS ATP-PPase domain. Residue 235-241 (SGGVDSS) participates in ATP binding.

As to quaternary structure, homodimer.

The enzyme catalyses XMP + L-glutamine + ATP + H2O = GMP + L-glutamate + AMP + diphosphate + 2 H(+). The protein operates within purine metabolism; GMP biosynthesis; GMP from XMP (L-Gln route): step 1/1. Its function is as follows. Catalyzes the synthesis of GMP from XMP. The chain is GMP synthase [glutamine-hydrolyzing] from Escherichia coli (strain K12 / MC4100 / BW2952).